The sequence spans 324 residues: Probable uridine nucleosidase 1 (324 aa).

His-248 is a catalytic residue.

Belongs to the IUNH family.

The protein localises to the cytoplasm. The enzyme catalyses uridine + H2O = D-ribose + uracil. In terms of biological role, involved in pyrimidine breakdown. The polypeptide is Probable uridine nucleosidase 1 (URH1) (Oryza sativa subsp. japonica (Rice)).